The chain runs to 641 residues: Putative ABC transporter ATP-binding protein MA_0870 (641 aa).

The ABC transporter 1 domain maps to 10 to 250; sequence IEIKDLWYTY…IEVFHRLGLR (241 aa). 44–51 contributes to the ATP binding site; sequence GPTGCGKS. The interval 286–332 is disordered; sequence VKTPRNFSNPEEETGRRTDPAERNEFVNTGSGNIKYGDNRSENKGSE. Composition is skewed to basic and acidic residues over residues 298 to 310 and 322 to 332; these read ETGRRTDPAERNE and GDNRSENKGSE. An ABC transporter 2 domain is found at 338–566; the sequence is ISIRDLWSGY…IEILKQASLT (229 aa). 371-378 is an ATP binding site; the sequence is GTNGSGKS.

The protein belongs to the ABC transporter superfamily.

It localises to the cell membrane. Its function is as follows. Probably part of an ABC transporter complex. Responsible for energy coupling to the transport system. In Methanosarcina acetivorans (strain ATCC 35395 / DSM 2834 / JCM 12185 / C2A), this protein is Putative ABC transporter ATP-binding protein MA_0870.